A 426-amino-acid chain; its full sequence is Pregnancy-specific beta-1-glycoprotein 9 (426 aa).

The first 34 residues, 1 to 34 (MGPLPAPSCTQRITWKGLLLTASLLNFWNPPTTA), serve as a signal peptide directing secretion. Residues 35-144 (EVTIEAQPPK…IRHFTFTLYL (110 aa)) form the Ig-like V-type domain. Residues Asn-104 and Asn-111 are each glycosylated (N-linked (GlcNAc...) asparagine). Residues 127-129 (RGD) carry the Cell attachment site motif. 3 consecutive Ig-like C2-type domains span residues 147–234 (PKPY…VTLN), 242–326 (PYIT…PVIL), and 335–410 (PRIY…KSMT). Intrachain disulfides connect Cys-169–Cys-217, Cys-262–Cys-310, and Cys-354–Cys-394. N-linked (GlcNAc...) asparagine glycans are attached at residues Asn-199, Asn-268, Asn-303, and Asn-387.

Belongs to the immunoglobulin superfamily. CEA family. As to quaternary structure, interacts with latency-associated peptide; leading to TGFB1 activation.

Its subcellular location is the secreted. Functionally, binds to the small latent transforming growth factor-beta complex, consisting of the N-terminal TGFB1 latency-associated peptide (LAP) and the mature form of TGFB1, thereby leading to the activation of TGFB1. The activation of TGFB1 leads to stimulation of naive CD4(+) T-cells to increase FoxP3 expression and to an increase in the number of FoxP3(+) regulatory T-cells. Induces the differentiation of a suppressive CD4(+)LAP(+)FoxP3(-) T-cell subset. Induces the secretion of TGFB1 in macrophages, but not in activated CD4(+) T-cells. May reduce the expression of several pro-inflammatory cytokines and chemokines by CD4(+) T-cells, including IL2 and IL6. The protein is Pregnancy-specific beta-1-glycoprotein 9 (PSG9) of Homo sapiens (Human).